Reading from the N-terminus, the 832-residue chain is Armadillo segment polarity protein (832 aa).

Residues 1–20 (MSYQMPQNRTMSHNPYNSSD) show a composition bias toward polar residues. Residues 1 to 24 (MSYQMPQNRTMSHNPYNSSDMPMP) are disordered. ARM repeat units follow at residues 146 to 185 (NYQDDADLATRAIPELIKLLNDEDQVVVSQAAMMVHQLSK), 188 to 228 (ASRH…NLSH), 230 to 269 (RQGLLAIFKSGGIPALVKLLSSPVESVLFYAITTLHNLLL), 272 to 311 (DGSKMAVRLAGGLQKMVALLQRNNVKFLAIVTDCLQILAY), 356 to 395 (SSNKPAIVEAGGMQALAMHLGNPSQRLVQNCLWTLRNLSD), 397 to 434 (ATKVDGLETLLSGLVTVLGSSDVNVVTCAAGILSNLTC), 483 to 524 (SESA…NLAL), 594 to 634 (ELNR…ELAV), and 636 to 675 (KEVAEMIEAEGATAPLTELLNSANEGVATYAAAVLFKMSE). Positions 721–832 (AYEGLYGQGP…QVAAWYDTDL (112 aa)) are disordered. Over residues 767–777 (PAGSNPNAGNN) the composition is skewed to low complexity.

The protein belongs to the beta-catenin family.

It localises to the cytoplasm. Its subcellular location is the cell membrane. It is found in the cell junction. The protein localises to the adherens junction. Functionally, may associate with CadN and participate in the transmission of developmental information. Can associate with alpha-catenin. Accumulates through wg signaling; arm function in wg signal transduction is required early in development for determination of neuroblast fate. Arm and Abl proteins function cooperatively at adherens junctions in both the CNS and epidermis. The protein is Armadillo segment polarity protein of Aedes aegypti (Yellowfever mosquito).